Reading from the N-terminus, the 299-residue chain is Apolipoprotein E (299 aa).

The first 18 residues, 1-18, serve as a signal peptide directing secretion; it reads MKVLCTVLVVTLLAGCRA. Tandem repeats lie at residues 74-95, 96-117, 118-139, 140-161, 162-183, 184-205, and 224-245. The tract at residues 74–245 is 8 X 22 AA approximate tandem repeats; the sequence is VLMEDTMKAV…RLEEMREQME (172 aa). Residue M137 is modified to Methionine sulfoxide. The residue at position 141 (S141) is a Phosphoserine. Residues 152-162 are LDL and other lipoprotein receptors binding; the sequence is HLRKLRKRMLR. 156–159 serves as a coordination point for heparin; the sequence is LRKR. Residues 204–273 form a lipid-binding and lipoprotein association region; that stretch reads AALTGQPLQE…GWFEPMVEDM (70 aa). Heparin is bound at residue 219 to 226; that stretch reads GKQLRGRL. A specificity for association with VLDL region spans residues 261 to 273; sequence RLKGWFEPMVEDM.

The protein belongs to the apolipoprotein A1/A4/E family. In terms of assembly, homotetramer. May interact with ABCA1; functionally associated with ABCA1 in the biogenesis of HDLs. May interact with APP/A4 amyloid-beta peptide; the interaction is extremely stable in vitro but its physiological significance is unclear. May interact with MAPT. May interact with MAP2. In the cerebrospinal fluid, interacts with secreted SORL1. Interacts with PMEL; this allows the loading of PMEL luminal fragment on ILVs to induce fibril nucleation. Post-translationally, APOE exists as multiple glycosylated and sialylated glycoforms within cells and in plasma. The extent of glycosylation and sialylation are tissue and context specific. Glycated in plasma VLDL. In terms of processing, phosphorylated by FAM20C in the extracellular medium.

Its subcellular location is the secreted. It is found in the extracellular space. The protein localises to the extracellular matrix. It localises to the extracellular vesicle. The protein resides in the endosome. Its subcellular location is the multivesicular body. Its function is as follows. APOE is an apolipoprotein, a protein associating with lipid particles, that mainly functions in lipoprotein-mediated lipid transport between organs via the plasma and interstitial fluids. APOE is a core component of plasma lipoproteins and is involved in their production, conversion and clearance. Apolipoproteins are amphipathic molecules that interact both with lipids of the lipoprotein particle core and the aqueous environment of the plasma. As such, APOE associates with chylomicrons, chylomicron remnants, very low density lipoproteins (VLDL) and intermediate density lipoproteins (IDL) but shows a preferential binding to high-density lipoproteins (HDL). It also binds a wide range of cellular receptors including the LDL receptor/LDLR, the LDL receptor-related proteins LRP1, LRP2 and LRP8 and the very low-density lipoprotein receptor/VLDLR that mediate the cellular uptake of the APOE-containing lipoprotein particles. Finally, APOE also has a heparin-binding activity and binds heparan-sulfate proteoglycans on the surface of cells, a property that supports the capture and the receptor-mediated uptake of APOE-containing lipoproteins by cells. A main function of APOE is to mediate lipoprotein clearance through the uptake of chylomicrons, VLDLs, and HDLs by hepatocytes. APOE is also involved in the biosynthesis by the liver of VLDLs as well as their uptake by peripheral tissues ensuring the delivery of triglycerides and energy storage in muscle, heart and adipose tissues. By participating in the lipoprotein-mediated distribution of lipids among tissues, APOE plays a critical role in plasma and tissues lipid homeostasis. APOE is also involved in two steps of reverse cholesterol transport, the HDLs-mediated transport of cholesterol from peripheral tissues to the liver, and thereby plays an important role in cholesterol homeostasis. First, it is functionally associated with ABCA1 in the biogenesis of HDLs in tissues. Second, it is enriched in circulating HDLs and mediates their uptake by hepatocytes. APOE also plays an important role in lipid transport in the central nervous system, regulating neuron survival and sprouting. This chain is Apolipoprotein E (APOE), found in Octodon degus (Degu).